Here is a 268-residue protein sequence, read N- to C-terminus: Acyl-CoA-binding domain-containing protein 4 (268 aa).

Residues 12–101 (CQKQFQAAVS…MKLVAQKVID (90 aa)) form the ACB domain. Residues 23 to 32 (IQNLPKNGSY), 43 to 47 (YSYYK), Lys69, and Tyr88 contribute to the an acyl-CoA site. Residues 151 to 175 (AVSEPPCLPKEPAPPSPESHSPRDL) form a disordered region. A compositionally biased stretch (pro residues) spans 156 to 167 (PCLPKEPAPPSP). Phosphoserine is present on residues Ser166 and Ser171.

In terms of biological role, binds medium- and long-chain acyl-CoA esters and may function as an intracellular carrier of acyl-CoA esters. This is Acyl-CoA-binding domain-containing protein 4 (ACBD4) from Homo sapiens (Human).